A 918-amino-acid chain; its full sequence is Isoleucine--tRNA ligase (918 aa).

The 'HIGH' region signature appears at Pro-59–His-69. Glu-570 contributes to the L-isoleucyl-5'-AMP binding site. Residues Lys-611–Ser-615 carry the 'KMSKS' region motif. An ATP-binding site is contributed by Lys-614. The Zn(2+) site is built by Cys-893, Cys-896, Cys-908, and Cys-911.

The protein belongs to the class-I aminoacyl-tRNA synthetase family. IleS type 1 subfamily. As to quaternary structure, monomer. Zn(2+) serves as cofactor.

The protein localises to the cytoplasm. It carries out the reaction tRNA(Ile) + L-isoleucine + ATP = L-isoleucyl-tRNA(Ile) + AMP + diphosphate. Functionally, catalyzes the attachment of isoleucine to tRNA(Ile). As IleRS can inadvertently accommodate and process structurally similar amino acids such as valine, to avoid such errors it has two additional distinct tRNA(Ile)-dependent editing activities. One activity is designated as 'pretransfer' editing and involves the hydrolysis of activated Val-AMP. The other activity is designated 'posttransfer' editing and involves deacylation of mischarged Val-tRNA(Ile). The protein is Isoleucine--tRNA ligase of Campylobacter concisus (strain 13826).